An 867-amino-acid chain; its full sequence is Elongation factor 2 (867 aa).

The tr-type G domain occupies 17–368 (HNIRNLSVVA…MIVLHLPSPV (352 aa)). Residue 26 to 33 (AHVDHGKS) participates in GTP binding. A phosphothreonine mark is found at T57 and T59. GTP is bound by residues 176 to 179 (NKLD) and 231 to 233 (SGL). H723 carries the diphthamide modification.

The protein belongs to the TRAFAC class translation factor GTPase superfamily. Classic translation factor GTPase family. EF-G/EF-2 subfamily. In terms of processing, phosphorylation by EF-2 kinase completely inactivates EF-2.

The protein resides in the cytoplasm. It catalyses the reaction GTP + H2O = GDP + phosphate + H(+). Functionally, catalyzes the GTP-dependent ribosomal translocation step during translation elongation. During this step, the ribosome changes from the pre-translocational (PRE) to the post-translocational (POST) state as the newly formed A-site-bound peptidyl-tRNA and P-site-bound deacylated tRNA move to the P and E sites, respectively. Catalyzes the coordinated movement of the two tRNA molecules, the mRNA and conformational changes in the ribosome. The polypeptide is Elongation factor 2 (Blastocystis hominis).